Consider the following 159-residue polypeptide: 6,7-dimethyl-8-ribityllumazine synthase (159 aa).

Residues tryptophan 26, 58–60, and 80–82 each bind 5-amino-6-(D-ribitylamino)uracil; these read SFE and VVI. 85-86 contributes to the (2S)-2-hydroxy-3-oxobutyl phosphate binding site; sequence GT. The Proton donor role is filled by histidine 88. Phenylalanine 113 lines the 5-amino-6-(D-ribitylamino)uracil pocket. Arginine 127 provides a ligand contact to (2S)-2-hydroxy-3-oxobutyl phosphate.

This sequence belongs to the DMRL synthase family.

It carries out the reaction (2S)-2-hydroxy-3-oxobutyl phosphate + 5-amino-6-(D-ribitylamino)uracil = 6,7-dimethyl-8-(1-D-ribityl)lumazine + phosphate + 2 H2O + H(+). Its pathway is cofactor biosynthesis; riboflavin biosynthesis; riboflavin from 2-hydroxy-3-oxobutyl phosphate and 5-amino-6-(D-ribitylamino)uracil: step 1/2. Catalyzes the formation of 6,7-dimethyl-8-ribityllumazine by condensation of 5-amino-6-(D-ribitylamino)uracil with 3,4-dihydroxy-2-butanone 4-phosphate. This is the penultimate step in the biosynthesis of riboflavin. This chain is 6,7-dimethyl-8-ribityllumazine synthase, found in Renibacterium salmoninarum (strain ATCC 33209 / DSM 20767 / JCM 11484 / NBRC 15589 / NCIMB 2235).